A 470-amino-acid polypeptide reads, in one-letter code: Pyoverdine export outer membrane protein OpmQ (470 aa).

An N-terminal signal peptide occupies residues 1-18 (MTLPRHLCLLPLSLSLLA). C19 is lipidated: N-palmitoyl cysteine. The S-diacylglycerol cysteine moiety is linked to residue C19.

Belongs to the outer membrane factor (OMF) (TC 1.B.17) family. Part of the tripartite efflux system PvdRT-OpmQ, which is composed of an inner membrane component with both ATPase and permease domains, PvdT, a periplasmic membrane fusion protein, PvdR, and an outer membrane component, OpmQ.

The protein localises to the cell outer membrane. Functionally, part of the tripartite efflux system PvdRT-OpmQ required for the secretion into the extracellular milieu of the siderophore pyoverdine (PVD), which is involved in iron acquisition. The system is responsible for export of newly synthesized PVD after the final steps of biosynthesis have taken place in the periplasm. It is also responsible for recycling of PVD after internalization of ferri-PVD into the periplasm by the outer-membrane receptor FpvA and release of iron from PVD, thus making PVD available for new cycles of iron uptake. Contributes to resistance against ampicillin. The protein is Pyoverdine export outer membrane protein OpmQ of Pseudomonas putida (strain ATCC 47054 / DSM 6125 / CFBP 8728 / NCIMB 11950 / KT2440).